The chain runs to 418 residues: Glutamyl-tRNA reductase (418 aa).

Residues 49–52 (TCNR), Ser-109, 114–116 (EPQ), and Gln-120 each bind substrate. Cys-50 functions as the Nucleophile in the catalytic mechanism. 189–194 (GAGETI) is a binding site for NADP(+).

Belongs to the glutamyl-tRNA reductase family. In terms of assembly, homodimer.

It carries out the reaction (S)-4-amino-5-oxopentanoate + tRNA(Glu) + NADP(+) = L-glutamyl-tRNA(Glu) + NADPH + H(+). The protein operates within porphyrin-containing compound metabolism; protoporphyrin-IX biosynthesis; 5-aminolevulinate from L-glutamyl-tRNA(Glu): step 1/2. Catalyzes the NADPH-dependent reduction of glutamyl-tRNA(Glu) to glutamate 1-semialdehyde (GSA). This is Glutamyl-tRNA reductase from Shigella dysenteriae serotype 1 (strain Sd197).